The sequence spans 558 residues: Adenine deaminase (558 aa).

It belongs to the metallo-dependent hydrolases superfamily. Adenine deaminase family. It depends on Mn(2+) as a cofactor.

The enzyme catalyses adenine + H2O + H(+) = hypoxanthine + NH4(+). The sequence is that of Adenine deaminase from Methanoregula boonei (strain DSM 21154 / JCM 14090 / 6A8).